A 363-amino-acid polypeptide reads, in one-letter code: Alanine racemase (363 aa).

Catalysis depends on lysine 39, which acts as the Proton acceptor; specific for D-alanine. Lysine 39 carries the N6-(pyridoxal phosphate)lysine modification. Substrate is bound at residue arginine 134. The active-site Proton acceptor; specific for L-alanine is tyrosine 251. Methionine 299 is a substrate binding site.

This sequence belongs to the alanine racemase family. Pyridoxal 5'-phosphate serves as cofactor.

It carries out the reaction L-alanine = D-alanine. It participates in amino-acid biosynthesis; D-alanine biosynthesis; D-alanine from L-alanine: step 1/1. Functionally, catalyzes the interconversion of L-alanine and D-alanine. May also act on other amino acids. This is Alanine racemase (alr) from Thermodesulfovibrio yellowstonii (strain ATCC 51303 / DSM 11347 / YP87).